Reading from the N-terminus, the 323-residue chain is MGSRVSREEFEWVYTDQPHAARRKEILAKYPEIKSLMKPDHNLIWIVAMMLLVQLASFYLVKDLDWKWVIFWSYVFGSCLNHSMTLAIHEISHNFPFGHHKALWNRWFGMFANLSLGVPYSISFKRYHMDHHRYLGADKIDVDIPTDFEGWFFCTTFRKFVWVILQPLFYAFRPLFINPKPITYLEIINTVIQITFDIIIYYVFGVKSLVYMLAATLLGLGLHPISGHFIAEHYMFLKGHETYSYYGPLNLLTFNVGYHNEHHDFPNVPGKNLPMVRKIASEYYDDLPHYNSWIKVLYDFVTDDTISPYSRMKRPPKGNEILE.

Gly-2 carries the N-myristoyl glycine lipid modification. 2 consecutive transmembrane segments (helical) span residues 41-61 (HNLI…FYLV) and 68-88 (WVIF…TLAI). Residues 89–93 (HEISH) carry the Histidine box-1 motif. The helical transmembrane segment at 104–124 (WNRWFGMFANLSLGVPYSISF) threads the bilayer. Residues 128–132 (HMDHH) carry the Histidine box-2 motif. 3 helical membrane passes run 152-172 (FFCT…FYAF), 184-204 (YLEI…YYVF), and 209-229 (LVYM…SGHF). The Histidine box-3 motif lies at 259-263 (HNEHH). Ser-307 carries the post-translational modification Phosphoserine.

It belongs to the fatty acid desaturase type 1 family. DEGS subfamily. As to quaternary structure, interacts with RLBP1; the interaction increases synthesis of chromophore-precursors by DEGS1. Post-translationally, myristoylation can target the enzyme to the mitochondria leading to an increase in ceramide levels. Detected in testis. Detected in pachytene spermatocytes and round spermatids. Expressed in retina and retinal pigment epithelium by Mueller cells (at protein level).

Its subcellular location is the mitochondrion membrane. It is found in the endoplasmic reticulum membrane. The enzyme catalyses an N-acylsphinganine + 2 Fe(II)-[cytochrome b5] + O2 + 2 H(+) = an N-acylsphing-4-enine + 2 Fe(III)-[cytochrome b5] + 2 H2O. It carries out the reaction all-trans-retinol = 11-cis-retinol. The catalysed reaction is all-trans-retinol = 9-cis-retinol. It catalyses the reaction all-trans-retinol = 13-cis-retinol. The enzyme catalyses 11-cis-retinol = 13-cis-retinol. It carries out the reaction 11-cis-retinol = 9-cis-retinol. Its function is as follows. Has sphingolipid-delta-4-desaturase activity. Converts D-erythro-sphinganine to D-erythro-sphingosine (E-sphing-4-enine). Catalyzes the equilibrium isomerization of retinols. The sequence is that of Sphingolipid delta(4)-desaturase DES1 from Mus musculus (Mouse).